A 1390-amino-acid chain; its full sequence is DNA-directed RNA polymerase subunit beta'' (1390 aa).

Zn(2+)-binding residues include Cys-224, Cys-295, Cys-302, and Cys-305.

This sequence belongs to the RNA polymerase beta' chain family. RpoC2 subfamily. In terms of assembly, in plastids the minimal PEP RNA polymerase catalytic core is composed of four subunits: alpha, beta, beta', and beta''. When a (nuclear-encoded) sigma factor is associated with the core the holoenzyme is formed, which can initiate transcription. Zn(2+) serves as cofactor.

Its subcellular location is the plastid. The protein localises to the chloroplast. It carries out the reaction RNA(n) + a ribonucleoside 5'-triphosphate = RNA(n+1) + diphosphate. Its function is as follows. DNA-dependent RNA polymerase catalyzes the transcription of DNA into RNA using the four ribonucleoside triphosphates as substrates. In Daucus carota (Wild carrot), this protein is DNA-directed RNA polymerase subunit beta''.